A 720-amino-acid chain; its full sequence is Catalase-peroxidase (720 aa).

The tryptophyl-tyrosyl-methioninium (Trp-Tyr) (with M-233) cross-link spans 82–207 (WHSAGTYRTF…LGNTVMGLIY (126 aa)). Catalysis depends on His-83, which acts as the Proton acceptor. The segment at residues 207–233 (YVNPEGPNGEPDLEGSAKNIRESFGKM) is a cross-link (tryptophyl-tyrosyl-methioninium (Tyr-Met) (with W-82)). Heme b is bound at residue His-248.

Belongs to the peroxidase family. Peroxidase/catalase subfamily. As to quaternary structure, homodimer or homotetramer. It depends on heme b as a cofactor. In terms of processing, formation of the three residue Trp-Tyr-Met cross-link is important for the catalase, but not the peroxidase activity of the enzyme.

The enzyme catalyses H2O2 + AH2 = A + 2 H2O. It catalyses the reaction 2 H2O2 = O2 + 2 H2O. Functionally, bifunctional enzyme with both catalase and broad-spectrum peroxidase activity. In Halobacterium salinarum (strain ATCC 29341 / DSM 671 / R1), this protein is Catalase-peroxidase.